Consider the following 322-residue polypeptide: Lipoyl synthase 2 (322 aa).

Positions methionine 1–serine 36 are disordered. Positions threonine 14 to methionine 34 are enriched in basic and acidic residues. Residues cysteine 67, cysteine 72, cysteine 78, cysteine 93, cysteine 97, cysteine 100, and serine 306 each coordinate [4Fe-4S] cluster. Positions tryptophan 79–leucine 295 constitute a Radical SAM core domain.

This sequence belongs to the radical SAM superfamily. Lipoyl synthase family. [4Fe-4S] cluster serves as cofactor.

It localises to the cytoplasm. It carries out the reaction [[Fe-S] cluster scaffold protein carrying a second [4Fe-4S](2+) cluster] + N(6)-octanoyl-L-lysyl-[protein] + 2 oxidized [2Fe-2S]-[ferredoxin] + 2 S-adenosyl-L-methionine + 4 H(+) = [[Fe-S] cluster scaffold protein] + N(6)-[(R)-dihydrolipoyl]-L-lysyl-[protein] + 4 Fe(3+) + 2 hydrogen sulfide + 2 5'-deoxyadenosine + 2 L-methionine + 2 reduced [2Fe-2S]-[ferredoxin]. The protein operates within protein modification; protein lipoylation via endogenous pathway; protein N(6)-(lipoyl)lysine from octanoyl-[acyl-carrier-protein]: step 2/2. Functionally, catalyzes the radical-mediated insertion of two sulfur atoms into the C-6 and C-8 positions of the octanoyl moiety bound to the lipoyl domains of lipoate-dependent enzymes, thereby converting the octanoylated domains into lipoylated derivatives. The sequence is that of Lipoyl synthase 2 from Bradyrhizobium diazoefficiens (strain JCM 10833 / BCRC 13528 / IAM 13628 / NBRC 14792 / USDA 110).